Reading from the N-terminus, the 709-residue chain is Elongation factor G (709 aa).

The tr-type G domain maps to 10–295 (NQVRNIGIMA…AVVDYLPSPE (286 aa)). Residues 19–26 (AHIDAGKT), 91–95 (DTPGH), and 145–148 (NKMD) each bind GTP.

Belongs to the TRAFAC class translation factor GTPase superfamily. Classic translation factor GTPase family. EF-G/EF-2 subfamily.

The protein resides in the cytoplasm. Functionally, catalyzes the GTP-dependent ribosomal translocation step during translation elongation. During this step, the ribosome changes from the pre-translocational (PRE) to the post-translocational (POST) state as the newly formed A-site-bound peptidyl-tRNA and P-site-bound deacylated tRNA move to the P and E sites, respectively. Catalyzes the coordinated movement of the two tRNA molecules, the mRNA and conformational changes in the ribosome. This chain is Elongation factor G, found in Bifidobacterium animalis subsp. lactis (strain AD011).